A 259-amino-acid polypeptide reads, in one-letter code: Eukaryotic translation initiation factor 3 subunit G-2 (259 aa).

In terms of domain architecture, RRM spans 179–257; sequence SAVRISNLSE…LILSVEWSKP (79 aa).

It belongs to the eIF-3 subunit G family. As to quaternary structure, component of the eukaryotic translation initiation factor 3 (eIF-3) complex. The eIF-3 complex interacts with pix.

Its subcellular location is the cytoplasm. RNA-binding component of the eukaryotic translation initiation factor 3 (eIF-3) complex, which is involved in protein synthesis of a specialized repertoire of mRNAs and, together with other initiation factors, stimulates binding of mRNA and methionyl-tRNAi to the 40S ribosome. The eIF-3 complex specifically targets and initiates translation of a subset of mRNAs involved in cell proliferation. This subunit can bind 18S rRNA. This is Eukaryotic translation initiation factor 3 subunit G-2 from Drosophila mojavensis (Fruit fly).